The chain runs to 335 residues: Phosphate acyltransferase (335 aa).

This sequence belongs to the PlsX family. In terms of assembly, homodimer. Probably interacts with PlsY.

It is found in the cytoplasm. It catalyses the reaction a fatty acyl-[ACP] + phosphate = an acyl phosphate + holo-[ACP]. It participates in lipid metabolism; phospholipid metabolism. In terms of biological role, catalyzes the reversible formation of acyl-phosphate (acyl-PO(4)) from acyl-[acyl-carrier-protein] (acyl-ACP). This enzyme utilizes acyl-ACP as fatty acyl donor, but not acyl-CoA. The chain is Phosphate acyltransferase from Streptococcus uberis (strain ATCC BAA-854 / 0140J).